Here is a 291-residue protein sequence, read N- to C-terminus: ATP synthase gamma chain (291 aa).

The protein belongs to the ATPase gamma chain family. F-type ATPases have 2 components, CF(1) - the catalytic core - and CF(0) - the membrane proton channel. CF(1) has five subunits: alpha(3), beta(3), gamma(1), delta(1), epsilon(1). CF(0) has three main subunits: a, b and c.

The protein localises to the cell membrane. Functionally, produces ATP from ADP in the presence of a proton gradient across the membrane. The gamma chain is believed to be important in regulating ATPase activity and the flow of protons through the CF(0) complex. The polypeptide is ATP synthase gamma chain (Lachnoclostridium phytofermentans (strain ATCC 700394 / DSM 18823 / ISDg) (Clostridium phytofermentans)).